A 217-amino-acid polypeptide reads, in one-letter code: Large ribosomal subunit protein uL3 (217 aa).

The protein belongs to the universal ribosomal protein uL3 family. Part of the 50S ribosomal subunit. Forms a cluster with proteins L14 and L19.

In terms of biological role, one of the primary rRNA binding proteins, it binds directly near the 3'-end of the 23S rRNA, where it nucleates assembly of the 50S subunit. The polypeptide is Large ribosomal subunit protein uL3 (Mycolicibacterium smegmatis (strain ATCC 700084 / mc(2)155) (Mycobacterium smegmatis)).